The following is a 464-amino-acid chain: Protein ABHD18 (464 aa).

A signal peptide spans 1-24; sequence MGVSKLDILYRRLLLTKLFIRGWG. An N-linked (GlcNAc...) asparagine glycan is attached at asparagine 341.

The protein belongs to the AB hydrolase superfamily.

It localises to the secreted. The protein is Protein ABHD18 of Rattus norvegicus (Rat).